Consider the following 432-residue polypeptide: MESQQLMACAILVIVLVGIFGNSLSFILFSRPHMRSSSVNVLLCALSFFDFSLLTLSIPIFVIPNLDLWANDLSLSTYMAYILKLIYPINLMMQTCSVYIMVMITLERWVAVCRPLQVRVWCTPRKSRNAILVIIVSAFLYNFVRFFEYRFVVTESGALYEKWLRDPGKHRWYYVGYYTILYIVTHFLVPFSVMAFANGHVIVAMCKLSKTRQMLTRQQQREQSTTVMLLIVTFVFAICNTLPFLLNVSESIFPTLFQDESTRGLAYWLNDLSNLLVVLNSGTTFIIYFTFSEKYRQTLVFILKNGCCATVSDYNNYTAMSRTASMRISSETGGQIQRQGSKMSNSSRSSDVLLKPIYMQKRSERFSSEYNERTCKHLAPFEEHKLPKLPSEKRKKKLHKMSAVEHRGMPEITITFSEDLPDGEPDSPCQPC.

Over 1 to 8 (MESQQLMA) the chain is Extracellular. A helical membrane pass occupies residues 9–29 (CAILVIVLVGIFGNSLSFILF). The Cytoplasmic portion of the chain corresponds to 30–42 (SRPHMRSSSVNVL). A helical transmembrane segment spans residues 43 to 63 (LCALSFFDFSLLTLSIPIFVI). The Extracellular segment spans residues 64 to 84 (PNLDLWANDLSLSTYMAYILK). A helical membrane pass occupies residues 85–105 (LIYPINLMMQTCSVYIMVMIT). Residues 106–128 (LERWVAVCRPLQVRVWCTPRKSR) are Cytoplasmic-facing. Residues 129 to 149 (NAILVIIVSAFLYNFVRFFEY) traverse the membrane as a helical segment. The Extracellular segment spans residues 150 to 176 (RFVVTESGALYEKWLRDPGKHRWYYVG). Residues 177-197 (YYTILYIVTHFLVPFSVMAFA) traverse the membrane as a helical segment. Residues 198-225 (NGHVIVAMCKLSKTRQMLTRQQQREQST) are Cytoplasmic-facing. Residues 226–246 (TVMLLIVTFVFAICNTLPFLL) traverse the membrane as a helical segment. The Extracellular segment spans residues 247 to 271 (NVSESIFPTLFQDESTRGLAYWLND). A helical membrane pass occupies residues 272 to 292 (LSNLLVVLNSGTTFIIYFTFS). The Cytoplasmic segment spans residues 293–432 (EKYRQTLVFI…GEPDSPCQPC (140 aa)). Disordered stretches follow at residues 328–349 (ISSE…SSRS) and 388–411 (KLPS…GMPE).

The protein belongs to the G-protein coupled receptor 1 family. In terms of tissue distribution, expressed in a subset of neurons in the head, midbody, and tail, including AIY, ASI, BAG, URA, CAN, I6, PVQ, DVA, RIM, and VC, and in the anal sphincter and intestinal muscles. Expression from the ASI neurons is involved in promoting arousal.

Its subcellular location is the cell membrane. Functionally, G-protein coupled receptor for flp-2 neuropeptides. May act through the G(q) alpha type of G proteins. Involved in mediating arousal from the sleep-like state called lethargus, which occurs during molting between larval and adult stages, in part by regulating touch sensitivity, and working in concert with neuropeptide pdf-1. In Caenorhabditis elegans, this protein is FMRFamide peptide receptor frpr-18.